We begin with the raw amino-acid sequence, 274 residues long: THAP domain-containing protein 8 (274 aa).

The THAP-type zinc finger occupies 1–85 (MPKYCRAPNC…LRPDAVPSIF (85 aa)). Residues 83–121 (SIFSRGPPAKSQRRTRSTQKPVSPPPPLQKNTPLPQSPA) are disordered.

The protein is THAP domain-containing protein 8 (THAP8) of Homo sapiens (Human).